The sequence spans 459 residues: MAP kinase-interacting serine/threonine-protein kinase 2 (459 aa).

The segment at 28 to 67 (LDPAQHGDSDFSPQCEARPDMPSSQPIDIPDAKKRGRKKK) is disordered. The Nuclear localization signal signature appears at 60-66 (KKRGRKK). Position 74 is a phosphoserine (Ser-74). In terms of domain architecture, Protein kinase spans 84-368 (QLQEDVLGEG…AAQVLQHPWV (285 aa)). Residues 90–98 (LGEGAHARV) and Lys-113 contribute to the ATP site. Residue 160–162 (EKM) coordinates staurosporine. The active-site Proton acceptor is the Asp-205. Glu-209 lines the staurosporine pocket. Phosphothreonine is present on residues Thr-244 and Thr-249. The Zn(2+) site is built by Cys-299, Cys-311, and Cys-314. Position 379 is a phosphothreonine (Thr-379). Residues Ser-431 and Ser-434 each carry the phosphoserine modification. Positions 438 to 442 (LAQRR) match the MAP kinase binding motif. At Ser-446 the chain carries Phosphoserine. Thr-450 is modified (phosphothreonine).

It belongs to the protein kinase superfamily. CAMK Ser/Thr protein kinase family. As to quaternary structure, monomer. Interacts with the C-terminal regions of EIF4G1 and EIF4G2; this interaction is promoted when MAPK pathways are repressed but repressed upon ERK proteins activation. Also binds to dephosphorylated MAPK3/ERK1 and MAPK1/ER2K. Interaction with phosphorylated MAPK3/ERK1 and MAPK1/ER2K protects it from dephosphorylation and inactivation. Interacts with ESR2 and EIF4E in the nucleus. The cofactor is Mg(2+). Zn(2+) is required as a cofactor. Dual phosphorylation of Thr-244 and Thr-249 activates the kinase. Phosphorylation of Thr-379 activates the kinase. Phosphorylated upon arsenic trioxide As(2)O(3) treatment. Phosphorylated by MAPK1/ERK2, MAPK11 and MAPK14. Dephosphorylated by PP2A.

The protein localises to the cytoplasm. It localises to the nucleus. It is found in the PML body. The catalysed reaction is L-seryl-[protein] + ATP = O-phospho-L-seryl-[protein] + ADP + H(+). It catalyses the reaction L-threonyl-[protein] + ATP = O-phospho-L-threonyl-[protein] + ADP + H(+). Its activity is regulated as follows. Inhibited by CGP57380 and staurosporine. Serine/threonine-protein kinase that phosphorylates SFPQ/PSF, HNRNPA1 and EIF4E. May play a role in the response to environmental stress and cytokines. Appears to regulate translation by phosphorylating EIF4E, thus increasing the affinity of this protein for the 7-methylguanosine-containing mRNA cap. Required for mediating PP2A-inhibition-induced EIF4E phosphorylation. Triggers EIF4E shuttling from cytoplasm to nucleus. Enhances the formation of EIF4F complex in pachytene spermatocytes, thus promoting mRNA translation during spermatogenesis. Displays a high basal kinase activity. Acts as a mediator of the suppressive effects of IFNgamma on hematopoiesis. Negative regulator for signals that control generation of arsenic trioxide As(2)O(3)-dependent apoptosis and anti-leukemic responses. Involved in anti-apoptotic signaling in response to serum withdrawal. This is MAP kinase-interacting serine/threonine-protein kinase 2 (Mknk2) from Rattus norvegicus (Rat).